A 297-amino-acid chain; its full sequence is 4-hydroxy-tetrahydrodipicolinate synthase (297 aa).

Residue Thr-50 coordinates pyruvate. Tyr-138 functions as the Proton donor/acceptor in the catalytic mechanism. The active-site Schiff-base intermediate with substrate is the Lys-166. Pyruvate is bound at residue Ile-208.

It belongs to the DapA family. As to quaternary structure, homotetramer; dimer of dimers.

The protein resides in the cytoplasm. The enzyme catalyses L-aspartate 4-semialdehyde + pyruvate = (2S,4S)-4-hydroxy-2,3,4,5-tetrahydrodipicolinate + H2O + H(+). Its pathway is amino-acid biosynthesis; L-lysine biosynthesis via DAP pathway; (S)-tetrahydrodipicolinate from L-aspartate: step 3/4. Its function is as follows. Catalyzes the condensation of (S)-aspartate-beta-semialdehyde [(S)-ASA] and pyruvate to 4-hydroxy-tetrahydrodipicolinate (HTPA). This chain is 4-hydroxy-tetrahydrodipicolinate synthase, found in Desulfotalea psychrophila (strain LSv54 / DSM 12343).